We begin with the raw amino-acid sequence, 279 residues long: Fatty-acid-binding protein 1 (279 aa).

Dodecanoate contacts are provided by arginine 103, tyrosine 116, and serine 183.

This sequence belongs to the chalcone isomerase family. Expressed in developing cotyledons, young seedlings, roots, seeds, embryos, macrospores, preanthesis and tapetum. Restricted to developing and reproductive tissues.

Its subcellular location is the plastid. The protein localises to the chloroplast stroma. Fatty-acid-binding protein. Interacts preferentially with saturated fatty acid. May be involved in alpha-linolenic (C18:3) metabolism. In Arabidopsis thaliana (Mouse-ear cress), this protein is Fatty-acid-binding protein 1 (FAP1).